A 130-amino-acid polypeptide reads, in one-letter code: Small ribosomal subunit protein uS8 (130 aa).

This sequence belongs to the universal ribosomal protein uS8 family. As to quaternary structure, part of the 30S ribosomal subunit.

One of the primary rRNA binding proteins, it binds directly to 16S rRNA central domain where it helps coordinate assembly of the platform of the 30S subunit. The polypeptide is Small ribosomal subunit protein uS8 (Methanococcus vannielii (strain ATCC 35089 / DSM 1224 / JCM 13029 / OCM 148 / SB)).